The following is a 98-amino-acid chain: Putative transcriptional regulator YdaS (98 aa).

In terms of biological role, when overexpressed, it induces Rac prophage excision, possibly to counteract the lethal toxicity of YdaT. Overexpression of ydaS or ydaST reduces growth and leads to loss of cell viability. May contribute to toxicity and morphological defects. The sequence is that of Putative transcriptional regulator YdaS (ydaS) from Escherichia coli (strain K12).